Here is a 530-residue protein sequence, read N- to C-terminus: Metal transporter Nramp5 (530 aa).

Residues 1-10 (MTGSTVSRQE) show a composition bias toward polar residues. The disordered stretch occupies residues 1–53 (MTGSTVSRQENSPKRPNDSNGEFKRLLVPETSQPEEDELHESPPENQILNVEE). Over residues 11–27 (NSPKRPNDSNGEFKRLL) the composition is skewed to basic and acidic residues. The next 12 helical transmembrane spans lie at 65 to 85 (FSWAKLWKFTGPGFLMSIAFL), 98 to 118 (AVAGYSLLWLLLWATLMGLLM), 147 to 167 (ILLWFMAEVALIGADIQEVIG), 179 to 199 (FLPIWVGVIITSFDCFLISYL), 207 to 227 (LEGLFAVLIATMALSFAWMFN), 253 to 273 (AVGVVGCVITPHNVFLHSALV), 299 to 319 (AALFVSFMINLFVTAVFAKGF), 341 to 361 (YGGGVFPILYIWGIGLLAAGQ), 387 to 407 (LSAFITRSFAIVPTMFVAIMF), 429 to 449 (IPFAVIPLLTMVSNEHIMGVF), 458 to 478 (LAWTVAVFVMMINGYLLLDFF), and 485 to 505 (FLVGFLVFGGVVGYISFIIYL).

Belongs to the NRAMP (TC 2.A.55) family.

The protein localises to the membrane. Functionally, seems to be involved in iron uptake. In Arabidopsis thaliana (Mouse-ear cress), this protein is Metal transporter Nramp5 (NRAMP5).